The sequence spans 141 residues: Large ribosomal subunit protein uL11 (141 aa).

Belongs to the universal ribosomal protein uL11 family. In terms of assembly, part of the ribosomal stalk of the 50S ribosomal subunit. Interacts with L10 and the large rRNA to form the base of the stalk. L10 forms an elongated spine to which L12 dimers bind in a sequential fashion forming a multimeric L10(L12)X complex. In terms of processing, one or more lysine residues are methylated.

Its function is as follows. Forms part of the ribosomal stalk which helps the ribosome interact with GTP-bound translation factors. In Pseudothermotoga lettingae (strain ATCC BAA-301 / DSM 14385 / NBRC 107922 / TMO) (Thermotoga lettingae), this protein is Large ribosomal subunit protein uL11.